We begin with the raw amino-acid sequence, 143 residues long: Fluoride-specific ion channel FluC 1 (143 aa).

Helical transmembrane passes span 13–33 (VLVGLVFLGGCLGTLIRSVIA), 42–62 (GVPWGTLAINLVGAFVLATLL), 80–100 (LCIGTGLLGGFTTYSALTVEA), and 111–131 (WGIAYLLTSVAAGALLAWVVI). The Na(+) site is built by glycine 88 and threonine 91.

This sequence belongs to the fluoride channel Fluc/FEX (TC 1.A.43) family.

The protein resides in the cell membrane. The catalysed reaction is fluoride(in) = fluoride(out). Its activity is regulated as follows. Na(+) is not transported, but it plays an essential structural role and its presence is essential for fluoride channel function. Fluoride-specific ion channel. Important for reducing fluoride concentration in the cell, thus reducing its toxicity. This chain is Fluoride-specific ion channel FluC 1, found in Cutibacterium acnes (strain DSM 16379 / KPA171202) (Propionibacterium acnes).